The primary structure comprises 837 residues: Endo-1,4-beta-xylanase Z (837 aa).

Positions 1-28 (MSRKLFSVLLVGLMLMTSLLVTISSTSA) are cleaved as a signal peptide. In terms of domain architecture, CBM6 spans 299–420 (TRIEAEDYDG…PVNIDWFTFG (122 aa)). Residues 424–492 (SSTGLGDLNG…ILRIITEFPG (69 aa)) form the Dockerin domain. The GH10 domain occupies 512–833 (TISGNALRDY…KPAYNAIKEA (322 aa)). Glu645 serves as the catalytic Proton donor. Glu754 acts as the Nucleophile in catalysis. Cys783 and Cys789 are oxidised to a cystine.

This sequence belongs to the glycosyl hydrolase 10 (cellulase F) family.

It carries out the reaction Endohydrolysis of (1-&gt;4)-beta-D-xylosidic linkages in xylans.. The sequence is that of Endo-1,4-beta-xylanase Z (xynZ) from Acetivibrio thermocellus (strain ATCC 27405 / DSM 1237 / JCM 9322 / NBRC 103400 / NCIMB 10682 / NRRL B-4536 / VPI 7372) (Clostridium thermocellum).